The following is a 203-amino-acid chain: Small ribosomal subunit protein uS4 (203 aa).

In terms of domain architecture, S4 RNA-binding spans 93-154; it reads RRFDNVVFRA…KSKNMDAVTE (62 aa).

This sequence belongs to the universal ribosomal protein uS4 family. As to quaternary structure, part of the 30S ribosomal subunit. Contacts protein S5. The interaction surface between S4 and S5 is involved in control of translational fidelity.

In terms of biological role, one of the primary rRNA binding proteins, it binds directly to 16S rRNA where it nucleates assembly of the body of the 30S subunit. With S5 and S12 plays an important role in translational accuracy. The sequence is that of Small ribosomal subunit protein uS4 from Prosthecochloris aestuarii (strain DSM 271 / SK 413).